A 418-amino-acid chain; its full sequence is Chromo domain-containing protein rhino (418 aa).

A Chromo domain is found at 24 to 74; it reads YVVEKILGKRFVNGRPQVLVKWSGFPNENNTWEPLENVGNCMKLVSDFESE. Low complexity-rich tracts occupy residues 84 to 99 and 107 to 120; these read AKSVGKSKSSPSSSGP and SSSKKTQQHSKSVQ. Disordered regions lie at residues 84-167 and 199-337; these read AKSV…TDST and PTKD…RCPR. Basic residues predominate over residues 131-143; that stretch reads NQKKGKNIKKTAG. Polar residues predominate over residues 152–167; the sequence is PKTQMPSTSQVSTDST. Over residues 218 to 228 the composition is skewed to basic and acidic residues; the sequence is RLIEFPQREDA. The span at 258–275 shows a compositional bias: low complexity; the sequence is GESSSSMSLPTVSSTSSE. Residues 276–285 show a composition bias toward basic and acidic residues; that stretch reads KSIKVTKSEP. The tract at residues 353-418 is required for interaction with del/deadlock; it reads TKPFGVNRGL…FESLRIIVPK (66 aa).

Homodimer in solution. Dimerization is essential for chromatin binding. Component of the Rhino-Deadlock-Cutoff (RDC) complex, composed of rhi/rhino, del/deadlock and cuff/cutoff. Interacts (via C-terminus) with del/deadlock (via N-terminus); this interaction is direct. Two copies of del/deadlock associate with each rhi/rhino dimer. Interacts with cuff/cutoff; this interaction is indirect and is mediated by del/deadlock. Interacts (via Chromo domain) with kipf/kipferl (via C2H2 type zinc finger 4). Interacts (via Chromo domain) with His3/histone H3 (via N-terminus di- or tri-methylated on 'Lys-10' (H3K9me2/3)); this interaction is direct. Two His3 N-terminal tails oriented anti-parallel to each other are required for dimer binding to His3. Female specific, expressed in both somatic and germline cells but highly enriched in ovaries. In the germarium of the developing oocyte expressed in germline stem cells, cystoblasts and developing germline cysts. Expressed in nurse cells in the germarium and egg chamber.

The protein localises to the nucleus. The protein resides in the chromosome. In terms of biological role, involved in piRNA (piwi-interacting RNA)-mediated transposon repression. May be involved in formation of the perinuclear nuage, a subcellular structure implicated in RNA processing that may be involved in transposon RNA surveillance and silencing. Required for ping-pong amplification during piRNA biogenesis, probably by promoting transcription of piRNA precursors. As part of the Rhino-Deadlock-Cutoff (RDC) Complex associates with, and drives non-canonical transcription of germline specific dual-strand piRNA clusters 80F, 38C and 42AB, but not single-stranded piRNA cluster 20A. Induction of piRNA expression is potentially achieved through a mechanism that prevents transcriptional termination and leads to readthrough from flanking transcription units. Recruited to specific chromatin regions by a combination of H3K9me2/3 histone methylation and differentially expressed sequence-specific recruitment factors. This association may involve direct interaction with DNA. Associates with chromatin upon exposure to homologous piRNA and facilitates transcriptional read-through. As part of the RDC complex, involved in suppression of splicing. In ovaries, recruitment to specific heterochromatin clusters is nucleated and stabilized by kipf/kipferl. During oogenesis, involved in axis specification and may regulate chromosome condensation at the onset of a mitotic-like phase that occurs during nurse cell chromosome duplication. Involved in the distribution of mRNAs for proteins that play a role in anterior-posterior and dorsal-ventral axes specification during development of the oocyte, including grk/gurken, osk/oskar and vas/vasa. Mitigates meiotic double strand breaks and interacts with DNA damage signaling to mediate axis specification. This is Chromo domain-containing protein rhino from Drosophila melanogaster (Fruit fly).